The primary structure comprises 587 residues: Laccase abr2 (587 aa).

Residues 1–17 (MWYQSASLLGVAAVAQA) form the signal peptide. 2 Plastocyanin-like domains span residues 41–137 (IFVN…VHIR) and 168–350 (LVML…ANDG). N-linked (GlcNAc...) asparagine glycosylation is present at asparagine 71. Residues histidine 75, histidine 77, histidine 119, and histidine 121 each contribute to the Cu cation site. N-linked (GlcNAc...) asparagine glycosylation is found at asparagine 228, asparagine 383, asparagine 420, and asparagine 462. The Plastocyanin-like 3 domain maps to 397-577 (PPYPAISPAS…ILMDGVDVWP (181 aa)). Position 487 (histidine 487) interacts with Cu cation. The N-linked (GlcNAc...) asparagine glycan is linked to asparagine 504.

This sequence belongs to the multicopper oxidase family.

It is found in the cell surface. Its pathway is pigment biosynthesis; melanin biosynthesis. Its function is as follows. Laccase; part of the gene cluster that mediates the biosynthesis of dihydroxynaphthalene (DHN)-melanin, a bluish-green pigment and a structural component of the conidial wall. The first step of the pathway is the production of the heptaketide naphtopyrone YWA1 by the polyketide synthase alb1 though condensation of acetyl-CoA with malonyl-CoA. The naphtopyrone YWA1 is then converted to the pentaketide 1,3,6,8-tetrahydroxynaphthalene (1,3,6,8-THN) by the heptaketide hydrolyase ayg1 though chain-length shortening. 1,3,6,8-THN is substrate of the hydroxynaphthalene reductase arp2 to yield scytalone. The scytalone dehydratase arp1 then reduces scytalone to 1,3,8-THN. 1,3,8-THN is also substrate of the hydroxynaphthalene reductase arp2 to yield vermelone. Vermelone is further converted by the multicopper oxidase abr1 to 1,8-DHN. Finally the laccase abr2 transforms 1,8-DHN to DHN-melanin. DHN-melanin biosynthesis appears to be initiated in endosomes where early enzymes (abl1, ayg1, arp1 and arp2) localize, with exocytosis leading to melanin deposition on the cell surface where late enzymes (abr1 and abr2) localize. DHN-melanin is an important structural component of the outer cell wall and is required for the presence of conidial surface hydrophobins. DHN-melanin also plays a crucial role in fungal virulence, including a protective role against the host's immune defenses. DHN-melanin also protects conidia against amoeba predation. The sequence is that of Laccase abr2 from Aspergillus fumigatus (strain ATCC MYA-4609 / CBS 101355 / FGSC A1100 / Af293) (Neosartorya fumigata).